An 83-amino-acid polypeptide reads, in one-letter code: Protein ORF5 (83 aa).

This sequence belongs to the microviridae C protein family.

Plays a central role in the packaging of viral DNA into phage procapsid, which occurs in the late stage of infection. Can interact with the replicative complex after the completion of one round of DNA synthesis. When protein ORF5 is bound to the replicative form, the complex becomes accessible to procapsid and serves as a DNA packaging apparatus. The sequence is that of Protein ORF5 from Spiroplasma melliferum (SpV4).